A 354-amino-acid chain; its full sequence is UDP-N-acetylglucosamine--N-acetylmuramyl-(pentapeptide) pyrophosphoryl-undecaprenol N-acetylglucosamine transferase (354 aa).

UDP-N-acetyl-alpha-D-glucosamine is bound by residues 13 to 15 (SGG), N125, S189, I242, 261 to 266 (ALTVSE), and Q286.

It belongs to the glycosyltransferase 28 family. MurG subfamily.

The protein resides in the cell inner membrane. The enzyme catalyses di-trans,octa-cis-undecaprenyl diphospho-N-acetyl-alpha-D-muramoyl-L-alanyl-D-glutamyl-meso-2,6-diaminopimeloyl-D-alanyl-D-alanine + UDP-N-acetyl-alpha-D-glucosamine = di-trans,octa-cis-undecaprenyl diphospho-[N-acetyl-alpha-D-glucosaminyl-(1-&gt;4)]-N-acetyl-alpha-D-muramoyl-L-alanyl-D-glutamyl-meso-2,6-diaminopimeloyl-D-alanyl-D-alanine + UDP + H(+). Its pathway is cell wall biogenesis; peptidoglycan biosynthesis. Its function is as follows. Cell wall formation. Catalyzes the transfer of a GlcNAc subunit on undecaprenyl-pyrophosphoryl-MurNAc-pentapeptide (lipid intermediate I) to form undecaprenyl-pyrophosphoryl-MurNAc-(pentapeptide)GlcNAc (lipid intermediate II). The protein is UDP-N-acetylglucosamine--N-acetylmuramyl-(pentapeptide) pyrophosphoryl-undecaprenol N-acetylglucosamine transferase of Buchnera aphidicola subsp. Acyrthosiphon pisum (strain APS) (Acyrthosiphon pisum symbiotic bacterium).